The chain runs to 280 residues: Putative pyruvate, phosphate dikinase regulatory protein (280 aa).

Residue 153–160 (GISRTSKT) coordinates ADP.

The protein belongs to the pyruvate, phosphate/water dikinase regulatory protein family. PDRP subfamily.

It catalyses the reaction N(tele)-phospho-L-histidyl/L-threonyl-[pyruvate, phosphate dikinase] + ADP = N(tele)-phospho-L-histidyl/O-phospho-L-threonyl-[pyruvate, phosphate dikinase] + AMP + H(+). It carries out the reaction N(tele)-phospho-L-histidyl/O-phospho-L-threonyl-[pyruvate, phosphate dikinase] + phosphate + H(+) = N(tele)-phospho-L-histidyl/L-threonyl-[pyruvate, phosphate dikinase] + diphosphate. Functionally, bifunctional serine/threonine kinase and phosphorylase involved in the regulation of the pyruvate, phosphate dikinase (PPDK) by catalyzing its phosphorylation/dephosphorylation. This Bartonella quintana (strain Toulouse) (Rochalimaea quintana) protein is Putative pyruvate, phosphate dikinase regulatory protein.